We begin with the raw amino-acid sequence, 584 residues long: 2-succinyl-5-enolpyruvyl-6-hydroxy-3-cyclohexene-1-carboxylate synthase (584 aa).

The protein belongs to the TPP enzyme family. MenD subfamily. In terms of assembly, homodimer. The cofactor is Mg(2+). Requires Mn(2+) as cofactor. It depends on thiamine diphosphate as a cofactor.

The catalysed reaction is isochorismate + 2-oxoglutarate + H(+) = 5-enolpyruvoyl-6-hydroxy-2-succinyl-cyclohex-3-ene-1-carboxylate + CO2. The protein operates within quinol/quinone metabolism; 1,4-dihydroxy-2-naphthoate biosynthesis; 1,4-dihydroxy-2-naphthoate from chorismate: step 2/7. Its pathway is quinol/quinone metabolism; menaquinone biosynthesis. Functionally, catalyzes the thiamine diphosphate-dependent decarboxylation of 2-oxoglutarate and the subsequent addition of the resulting succinic semialdehyde-thiamine pyrophosphate anion to isochorismate to yield 2-succinyl-5-enolpyruvyl-6-hydroxy-3-cyclohexene-1-carboxylate (SEPHCHC). The polypeptide is 2-succinyl-5-enolpyruvyl-6-hydroxy-3-cyclohexene-1-carboxylate synthase (Bacillus anthracis).